The chain runs to 288 residues: ATP synthase gamma chain (288 aa).

This sequence belongs to the ATPase gamma chain family. F-type ATPases have 2 components, CF(1) - the catalytic core - and CF(0) - the membrane proton channel. CF(1) has five subunits: alpha(3), beta(3), gamma(1), delta(1), epsilon(1). CF(0) has three main subunits: a, b and c.

The protein localises to the cell inner membrane. Produces ATP from ADP in the presence of a proton gradient across the membrane. The gamma chain is believed to be important in regulating ATPase activity and the flow of protons through the CF(0) complex. The protein is ATP synthase gamma chain of Rickettsia akari (strain Hartford).